A 215-amino-acid chain; its full sequence is High frequency lysogenization protein HflD homolog (215 aa).

The protein belongs to the HflD family.

The protein resides in the cytoplasm. It localises to the cell inner membrane. This chain is High frequency lysogenization protein HflD homolog, found in Haemophilus ducreyi (strain 35000HP / ATCC 700724).